A 306-amino-acid chain; its full sequence is D-glucosamine-6-phosphate 4-epimerase (306 aa).

Residues 19–153 (DIPGVKTAEK…TGSNYRVQDL (135 aa)) enclose the SIS domain. Glu200 (proton acceptor) is an active-site residue. Residue His216 is the Proton donor of the active site. Residue Arg296 is the Proton acceptor of the active site.

It belongs to the PGI/PMI family.

It carries out the reaction D-glucosamine 6-phosphate = D-galactosamine 6-phosphate. Functionally, involved in the synthesis of UDP-N-acetylgalactosamine (UDP-GalNAc). Catalyzes the conversion of glucosamine-6-phosphate (GlcN-6-P) to galactosamine-6-phosphate (GalN-6-P). The chain is D-glucosamine-6-phosphate 4-epimerase from Sulfolobus acidocaldarius (strain ATCC 33909 / DSM 639 / JCM 8929 / NBRC 15157 / NCIMB 11770).